We begin with the raw amino-acid sequence, 348 residues long: tRNA N6-adenosine threonylcarbamoyltransferase (348 aa).

Residues His120 and His124 each contribute to the Fe cation site. Substrate is bound by residues 143–147 (LVSGG), Asp176, Gly189, and Asn282. Asp310 is a binding site for Fe cation.

This sequence belongs to the KAE1 / TsaD family. Requires Fe(2+) as cofactor.

Its subcellular location is the cytoplasm. The catalysed reaction is L-threonylcarbamoyladenylate + adenosine(37) in tRNA = N(6)-L-threonylcarbamoyladenosine(37) in tRNA + AMP + H(+). Its function is as follows. Required for the formation of a threonylcarbamoyl group on adenosine at position 37 (t(6)A37) in tRNAs that read codons beginning with adenine. Is involved in the transfer of the threonylcarbamoyl moiety of threonylcarbamoyl-AMP (TC-AMP) to the N6 group of A37, together with TsaE and TsaB. TsaD likely plays a direct catalytic role in this reaction. In Paracidovorax citrulli (strain AAC00-1) (Acidovorax citrulli), this protein is tRNA N6-adenosine threonylcarbamoyltransferase.